The sequence spans 248 residues: Large ribosomal subunit protein uL30 (248 aa).

Residues Lys22–Asn42 are disordered. Basic and acidic residues predominate over residues Gln24–Asn42.

It belongs to the universal ribosomal protein uL30 family. As to quaternary structure, component of the large ribosomal subunit (LSU). Mature N.crassa ribosomes consist of a small (40S) and a large (60S) subunit. The 40S small subunit contains 1 molecule of ribosomal RNA (18S rRNA) and at least 32 different proteins. The large 60S subunit contains 3 rRNA molecules (26S, 5.8S and 5S rRNA) and at least 42 different proteins.

The protein resides in the cytoplasm. Its function is as follows. Component of the ribosome, a large ribonucleoprotein complex responsible for the synthesis of proteins in the cell. The small ribosomal subunit (SSU) binds messenger RNAs (mRNAs) and translates the encoded message by selecting cognate aminoacyl-transfer RNA (tRNA) molecules. The large subunit (LSU) contains the ribosomal catalytic site termed the peptidyl transferase center (PTC), which catalyzes the formation of peptide bonds, thereby polymerizing the amino acids delivered by tRNAs into a polypeptide chain. The nascent polypeptides leave the ribosome through a tunnel in the LSU and interact with protein factors that function in enzymatic processing, targeting, and the membrane insertion of nascent chains at the exit of the ribosomal tunnel. This chain is Large ribosomal subunit protein uL30 (rpl-7), found in Neurospora crassa (strain ATCC 24698 / 74-OR23-1A / CBS 708.71 / DSM 1257 / FGSC 987).